The primary structure comprises 263 residues: Cobalt-precorrin-6A reductase (263 aa).

This sequence belongs to the precorrin-6x reductase family.

The catalysed reaction is Co-precorrin-6B + NAD(+) = Co-precorrin-6A + NADH + H(+). It participates in cofactor biosynthesis; adenosylcobalamin biosynthesis; cob(II)yrinate a,c-diamide from sirohydrochlorin (anaerobic route): step 7/10. Functionally, catalyzes the reduction of the macrocycle of cobalt-precorrin-6A to cobalt-precorrin-6B. This is Cobalt-precorrin-6A reductase (cbiJ) from Salmonella typhimurium (strain LT2 / SGSC1412 / ATCC 700720).